The chain runs to 141 residues: Hemoglobin subunit alpha-A (141 aa).

Residues 1-141 (VLSASDKTNV…VAKELTAKYR (141 aa)) enclose the Globin domain. His58 is a binding site for O2. His87 lines the heme b pocket.

Belongs to the globin family. Heterotetramer of two alpha chains and two beta chains. In terms of tissue distribution, red blood cells.

Functionally, involved in oxygen transport from the lung to the various peripheral tissues. The polypeptide is Hemoglobin subunit alpha-A (HBAA) (Phalacrocorax carbo (Great cormorant)).